Here is a 559-residue protein sequence, read N- to C-terminus: Formate--tetrahydrofolate ligase (559 aa).

68–75 (TPAGEGKT) contacts ATP.

It belongs to the formate--tetrahydrofolate ligase family.

It carries out the reaction (6S)-5,6,7,8-tetrahydrofolate + formate + ATP = (6R)-10-formyltetrahydrofolate + ADP + phosphate. It functions in the pathway one-carbon metabolism; tetrahydrofolate interconversion. This chain is Formate--tetrahydrofolate ligase, found in Mesorhizobium japonicum (strain LMG 29417 / CECT 9101 / MAFF 303099) (Mesorhizobium loti (strain MAFF 303099)).